The chain runs to 695 residues: Putative ATP-dependent DNA helicase R568 (695 aa).

The region spanning 86 to 499 is the UvrD-like helicase ATP-binding domain; the sequence is KFSEEQIKYI…FRNEEIFDSN (414 aa). ATP is bound at residue 107–114; the sequence is ACAGSGKT.

This sequence belongs to the helicase family. UvrD subfamily.

It catalyses the reaction Couples ATP hydrolysis with the unwinding of duplex DNA by translocating in the 3'-5' direction.. The enzyme catalyses ATP + H2O = ADP + phosphate + H(+). Its function is as follows. ATP-dependent DNA helicase. In Acanthamoeba polyphaga mimivirus (APMV), this protein is Putative ATP-dependent DNA helicase R568.